The primary structure comprises 450 residues: Phosphoglucosamine mutase (450 aa).

S101 functions as the Phosphoserine intermediate in the catalytic mechanism. Mg(2+) contacts are provided by S101, D240, D242, and D244. A Phosphoserine modification is found at S101.

The protein belongs to the phosphohexose mutase family. It depends on Mg(2+) as a cofactor. Activated by phosphorylation.

The catalysed reaction is alpha-D-glucosamine 1-phosphate = D-glucosamine 6-phosphate. Catalyzes the conversion of glucosamine-6-phosphate to glucosamine-1-phosphate. This is Phosphoglucosamine mutase from Streptococcus pneumoniae (strain Hungary19A-6).